A 126-amino-acid chain; its full sequence is UPF0292 protein TSIB_0423 (126 aa).

The Toprim domain maps to Asn20–Leu100. 3 residues coordinate Mg(2+): Glu26, Asp69, and Asp71.

Belongs to the UPF0292 family. The cofactor is Mg(2+).

The sequence is that of UPF0292 protein TSIB_0423 from Thermococcus sibiricus (strain DSM 12597 / MM 739).